The primary structure comprises 372 residues: Spermidine/putrescine import ATP-binding protein PotA (372 aa).

In terms of domain architecture, ABC transporter spans 13 to 243 (IKLTGISKSF…PKNLFVARFI (231 aa)). 45 to 52 (GPSGCGKT) contributes to the ATP binding site.

It belongs to the ABC transporter superfamily. Spermidine/putrescine importer (TC 3.A.1.11.1) family. In terms of assembly, the complex is composed of two ATP-binding proteins (PotA), two transmembrane proteins (PotB and PotC) and a solute-binding protein (PotD).

The protein resides in the cell inner membrane. The catalysed reaction is ATP + H2O + polyamine-[polyamine-binding protein]Side 1 = ADP + phosphate + polyamineSide 2 + [polyamine-binding protein]Side 1.. Part of the ABC transporter complex PotABCD involved in spermidine/putrescine import. Responsible for energy coupling to the transport system. This Aliivibrio fischeri (strain ATCC 700601 / ES114) (Vibrio fischeri) protein is Spermidine/putrescine import ATP-binding protein PotA.